The following is a 147-amino-acid chain: Hemoglobin subunit gamma (147 aa).

The 145-residue stretch at 3–147 (HFTAEEKAII…VATALAHKYH (145 aa)) folds into the Globin domain. 2 residues coordinate heme b: histidine 64 and histidine 93.

It belongs to the globin family. In terms of assembly, heterotetramer of two alpha chains and two gamma chains in fetal hemoglobin (Hb F). In terms of tissue distribution, red blood cells.

Its function is as follows. Gamma chains make up the fetal hemoglobin F, in combination with alpha chains. This chain is Hemoglobin subunit gamma (HBG), found in Otolemur crassicaudatus (Brown greater galago).